Here is a 1262-residue protein sequence, read N- to C-terminus: Zinc finger protein 592 (1262 aa).

Residues 23–45 form a disordered region; the sequence is SLDAKEAIQAPSEENESPLKSSG. Phosphoserine occurs at positions 78, 142, 145, and 146. Disordered regions lie at residues 122 to 174, 200 to 278, and 294 to 494; these read SFTS…PPPG, KKEP…AHSK, and VANV…ASTP. Residues Lys200 and Lys204 each participate in a glycyl lysine isopeptide (Lys-Gly) (interchain with G-Cter in SUMO2) cross-link. Composition is skewed to basic and acidic residues over residues 213 to 232 and 298 to 308; these read QQEH…DLDS and TKEDQPGHTKD. Residues 343-367 show a composition bias toward low complexity; that stretch reads PSDSPRSICSDSSSKGSPSVAASSP. Polar residues predominate over residues 454 to 463; that stretch reads IKTSDSSSPC. The span at 484-494 shows a compositional bias: low complexity; sequence QQSTAPQASTP. The residue at position 529 (Ser529) is a Phosphoserine. Lys546 is covalently cross-linked (Glycyl lysine isopeptide (Lys-Gly) (interchain with G-Cter in SUMO2)). A Phosphoserine modification is found at Ser573. A C2H2-type 1; atypical zinc finger spans residues 587–612; that stretch reads YCCLECGDAFALEKSLSQHYSRRSVH. The segment at 615–639 adopts a C2H2-type 2; atypical zinc-finger fold; the sequence is VLCTLCSKTLLFFNKCSLLRHARDH. Ser691 carries the phosphoserine modification. The C2H2-type 3; degenerate zinc-finger motif lies at 711-731; sequence TKCPECHKQMRDYMVLATHFQ. A C2H2-type 4 zinc finger spans residues 740-764; it reads LTCQVCQMLLPNQCSFCAHQRIHAH. Residues 768–790 form a C2H2-type 5; atypical zinc finger; it reads YCCPECGVLCRSAYFQTHVKENC. 3 consecutive C2H2-type zinc fingers follow at residues 799-822, 827-850, and 892-915; these read YRCI…QERH, HKCA…TTQH, and FKCP…KNTH. The span at 924–935 shows a compositional bias: low complexity; sequence LSSLQSSTDTSS. A disordered region spans residues 924 to 979; it reads LSSLQSSTDTSSNRPGSRAPAEPPATNVAARGSSLTAGRWGRPEAHRRAEARPRMR. Over residues 964–976 the composition is skewed to basic and acidic residues; it reads GRPEAHRRAEARP. C2H2-type zinc fingers lie at residues 983–1006 and 1013–1036; these read WTCQ…KKSH and YPCR…RNNH. The segment at 1043–1069 adopts a C2H2-type 11; atypical zinc-finger fold; it reads YTCGYCTEDSPSFPRPSLLESHISLMH. Residue Ser1089 is modified to Phosphoserine. Residues 1124-1146 form a C2H2-type 12; atypical zinc finger; it reads FQCAKCTFATDSELEFQSHIPQH. The C2H2-type 13 zinc finger occupies 1153–1176; that stretch reads AQCLLCGLCYTSTSSLNRHLFIVH. Ser1198 and Ser1202 each carry phosphoserine. The interval 1222–1262 is disordered; that stretch reads PLVTDLGGQQGLALDEDSAQDPQNQPQASQDQNSHALSPQV. The span at 1241–1262 shows a compositional bias: polar residues; the sequence is QDPQNQPQASQDQNSHALSPQV.

The protein belongs to the krueppel C2H2-type zinc-finger protein family. As to quaternary structure, interacts with ZMYND8. In terms of tissue distribution, expressed in the brain.

Its subcellular location is the nucleus. Functionally, may be involved in transcriptional regulation. In Mus musculus (Mouse), this protein is Zinc finger protein 592 (Znf592).